We begin with the raw amino-acid sequence, 678 residues long: Geranylgeranyl transferase type-2 subunit alpha 1 (678 aa).

5 PFTA repeats span residues 40 to 74 (YTNE…DRLA), 86 to 120 (ILDE…KGHS), 121 to 155 (SVGN…LTNR), 156 to 190 (SEQD…SLLA), and 201 to 235 (KIPE…QTLN). 5 LRR repeats span residues 510-532 (MNNL…VEKL), 533-554 (LFVQ…LEAM), 555-578 (QLLS…SLRH), 580-604 (KQLK…RYLC), and 638-663 (DLNL…VLQV).

Belongs to the protein prenyltransferase subunit alpha family. In terms of assembly, heterotrimer composed of the alpha subunit RGTA, the beta subunit RGTB and REP; within this trimer, RGTA and RGTB form the catalytic component, while REP mediates peptide substrate binding.

It catalyses the reaction geranylgeranyl diphosphate + L-cysteinyl-[protein] = S-geranylgeranyl-L-cysteinyl-[protein] + diphosphate. With respect to regulation, the enzymatic reaction requires the aid of the Rab escort protein REP. Functionally, catalyzes the transfer of a geranylgeranyl moiety from geranylgeranyl diphosphate to both cysteines of Rab proteins with the C-terminal sequence -CCXX, CXXX, -XCCX and -XCXC, such as RABA1A, RABA2A, RABF2A and RABG2. In vitro, can prenylate PGGTI targets with the C-terminal Cys-aliphatic-aliphatic-X (CaaX) with leucine in the terminal position. Substrates with the C-terminal sequence -CSIL such as ARAC11/ROP1 or GG2/AGG2 are prenylated independently of REP and when the alpha subunit is associated with a beta subunit (RGTB1 or RGTB2). This Arabidopsis thaliana (Mouse-ear cress) protein is Geranylgeranyl transferase type-2 subunit alpha 1.